Consider the following 364-residue polypeptide: UDP-3-O-acylglucosamine N-acyltransferase (364 aa).

Residue His257 is the Proton acceptor of the active site.

Belongs to the transferase hexapeptide repeat family. LpxD subfamily. In terms of assembly, homotrimer.

The catalysed reaction is a UDP-3-O-[(3R)-3-hydroxyacyl]-alpha-D-glucosamine + a (3R)-hydroxyacyl-[ACP] = a UDP-2-N,3-O-bis[(3R)-3-hydroxyacyl]-alpha-D-glucosamine + holo-[ACP] + H(+). Its pathway is bacterial outer membrane biogenesis; LPS lipid A biosynthesis. Its function is as follows. Catalyzes the N-acylation of UDP-3-O-acylglucosamine using 3-hydroxyacyl-ACP as the acyl donor. Is involved in the biosynthesis of lipid A, a phosphorylated glycolipid that anchors the lipopolysaccharide to the outer membrane of the cell. This is UDP-3-O-acylglucosamine N-acyltransferase from Paracoccus denitrificans (strain Pd 1222).